The primary structure comprises 131 residues: Protein ApaG (131 aa).

The ApaG domain occupies 3–127 (RAVTRQIEVT…FSLDSPDGGK (125 aa)).

The protein is Protein ApaG of Bradyrhizobium sp. (strain BTAi1 / ATCC BAA-1182).